A 381-amino-acid polypeptide reads, in one-letter code: 1-deoxy-D-xylulose 5-phosphate reductoisomerase (381 aa).

The NADPH site is built by Thr-10, Gly-11, Ser-12, Ile-13, Gly-36, Lys-37, Asn-38, and Asn-120. Position 121 (Lys-121) interacts with 1-deoxy-D-xylulose 5-phosphate. An NADPH-binding site is contributed by Glu-122. A Mn(2+)-binding site is contributed by Asp-146. 1-deoxy-D-xylulose 5-phosphate contacts are provided by Ser-147, Glu-148, Ser-172, and His-195. Glu-148 is a binding site for Mn(2+). Gly-201 contributes to the NADPH binding site. Residues Ser-208, Asn-213, Lys-214, and Glu-217 each contribute to the 1-deoxy-D-xylulose 5-phosphate site. Position 217 (Glu-217) interacts with Mn(2+).

Belongs to the DXR family. Mg(2+) serves as cofactor. Requires Mn(2+) as cofactor.

It catalyses the reaction 2-C-methyl-D-erythritol 4-phosphate + NADP(+) = 1-deoxy-D-xylulose 5-phosphate + NADPH + H(+). Its pathway is isoprenoid biosynthesis; isopentenyl diphosphate biosynthesis via DXP pathway; isopentenyl diphosphate from 1-deoxy-D-xylulose 5-phosphate: step 1/6. Catalyzes the NADPH-dependent rearrangement and reduction of 1-deoxy-D-xylulose-5-phosphate (DXP) to 2-C-methyl-D-erythritol 4-phosphate (MEP). The sequence is that of 1-deoxy-D-xylulose 5-phosphate reductoisomerase from Lysinibacillus sphaericus (strain C3-41).